The chain runs to 852 residues: MLGPAVLGLSLWALLQPGAGAPLCLSQQLRMKGDYMLGGLFPLGEAEEAGFRSRTRPSSPVCTRFSSNGLLWALAMKMAVEEINNKSDLLPGLRLGYDLFDTCSEPVVAMKPSLMFLAKAGSRDIAAYCNYTQYQPRVLAVIGPHSSELAMVTGKFFSFFLMPQVSYGASMELLSARETFPSFFRTVPSDRVQLTAAAELLQEFGWNWVAALGSDDEYGRQGLSIFSALAAARGICIAHEGLVPLPRADDSRLGKVQDVLHQVNQSSVQVVLLFASVHAAHALFNYSISSRLSPKVWVASEAWLTSDLVMGLPGMAQMGTVLGFLQRGAQLHEFPQYVKTHLALAADPAFCSALGEREQGLEEDVVGQRCPQCDCITLQNVSAGLNHHQTFSVYAAVYSVAQALHNTLQCNASGCPAQDPVKPWQLLENMYNLTFHAGGLMLRFDSSGNVDMEYDLKLWVWQGSVPRLHDVGRFNGSLRTERLKIRWHTSDNQKPVSRCSRQCQEGQVRRVKGFHSCCYDCVDCEAGSYRQNPDDVTCTSCGQDEWSPERSTRCFHRRSRFLAWGEPAVLLLLLLLSLALGLVLAALGLFVHHRDSPLVQASGGPLACFGLVCLGLVCLSVLLFPGQPSPAQCLAQQPLSHLPLTGCLSTLFLQAAEIFVESELPLSWADRLSGCLRGPWAWLVVLLAMLVEVALCTWYLVAFPPEVVTDWHMLPTEALVHCRTRSWVSFGLAHATNATLAFLCFLGTFLVRSQPGRYNRARGLTFAMLAYFITWVSFVPLLANVQVVLRPAVQMGALLLCVLGILAAFHLPRCYLLIRQPGLNTPEFFLGGGPGDAQGRNDGDTGNQGKHE.

An N-terminal signal peptide occupies residues 1-20; the sequence is MLGPAVLGLSLWALLQPGAG. Residues 21–570 are Extracellular-facing; the sequence is APLCLSQQLR…FLAWGEPAVL (550 aa). Residues N85, N130, N264, N285, N380, N411, N432, and N475 are each glycosylated (N-linked (GlcNAc...) asparagine). A helical transmembrane segment spans residues 571-591; the sequence is LLLLLLSLALGLVLAALGLFV. Over 592–603 the chain is Cytoplasmic; that stretch reads HHRDSPLVQASG. The helical transmembrane segment at 604–624 threads the bilayer; that stretch reads GPLACFGLVCLGLVCLSVLLF. At 625–639 the chain is on the extracellular side; it reads PGQPSPAQCLAQQPL. A helical transmembrane segment spans residues 640–660; it reads SHLPLTGCLSTLFLQAAEIFV. The Cytoplasmic portion of the chain corresponds to 661–682; that stretch reads ESELPLSWADRLSGCLRGPWAW. Residues 683–703 traverse the membrane as a helical segment; the sequence is LVVLLAMLVEVALCTWYLVAF. The Extracellular portion of the chain corresponds to 704 to 729; the sequence is PPEVVTDWHMLPTEALVHCRTRSWVS. Residues 730 to 750 form a helical membrane-spanning segment; sequence FGLAHATNATLAFLCFLGTFL. Residues 751–762 lie on the Cytoplasmic side of the membrane; sequence VRSQPGRYNRAR. A helical transmembrane segment spans residues 763-783; sequence GLTFAMLAYFITWVSFVPLLA. The Extracellular portion of the chain corresponds to 784–791; that stretch reads NVQVVLRP. A helical membrane pass occupies residues 792–812; it reads AVQMGALLLCVLGILAAFHLP. The Cytoplasmic portion of the chain corresponds to 813-852; sequence RCYLLIRQPGLNTPEFFLGGGPGDAQGRNDGDTGNQGKHE. Positions 833 to 852 are disordered; the sequence is GPGDAQGRNDGDTGNQGKHE. The segment covering 839-852 has biased composition (basic and acidic residues); that stretch reads GRNDGDTGNQGKHE.

Belongs to the G-protein coupled receptor 3 family. TAS1R subfamily. As to quaternary structure, forms homodimers or heterodimers with TAS1R1 and TAS1R2.

It localises to the cell membrane. In terms of biological role, putative taste receptor. TAS1R1/TAS1R3 responds to the umami taste stimulus (the taste of monosodium glutamate). TAS1R2/TAS1R3 recognizes diverse natural and synthetic sweeteners. TAS1R3 is essential for the recognition and response to the disaccharide trehalose. Sequence differences within and between species can significantly influence the selectivity and specificity of taste responses. The protein is Taste receptor type 1 member 3 (TAS1R3) of Gorilla gorilla gorilla (Western lowland gorilla).